A 2784-amino-acid polypeptide reads, in one-letter code: Cilia- and flagella-associated protein 46 (2784 aa).

Residues 129-162 (GLEVAAANQPRYQFLVYNASVHHWRVVAPLHRDG) form a TPR 1 repeat. Residues 242-268 (TAAAAKLTELQKDVARLQVHLATLAAA) adopt a coiled-coil conformation. Residues 401-434 (SLAPVVVAAHVKALEQLEDVLTTFTKLADVEGIH) form a TPR 2 repeat. 2 disordered regions span residues 543–562 (SAEPANPEEEAVSLIERSKE) and 581–607 (RDLPHPPPPAPTDPPGPDRDAAHAAAR). Residues 585–595 (HPPPPAPTDPP) show a composition bias toward pro residues. The stretch at 644–665 (AVDREMVLLQAQLAHYEAEAAI) forms a coiled coil. The disordered stretch occupies residues 670 to 697 (RRRADISPPTRPSPPEVDGEGVRQPPAT). A TPR 3 repeat occupies 708–743 (ASVRSMRGAMSVNEPWLTLNNAVQLYNAALPLMQQH). Disordered stretches follow at residues 799–837 (DAGQELEDDDDEDSLDEDGNPPPAGDAGPHFNRRSPAYK) and 929–954 (RVNEEKQPAGAGAEKGGGDKGRKPHG). Positions 802–817 (QELEDDDDEDSLDEDG) are enriched in acidic residues. One copy of the TPR 4 repeat lies at 976–1009 (LELWAKMARAVADAGVWPAALECSAAALAALPGA). Residues 1275–1288 (TGDLDGDGTDDEDD) are compositionally biased toward acidic residues. Disordered stretches follow at residues 1275–1351 (TGDL…RVPE) and 1640–1673 (AAGGGRGGRESPSPHDDGIHYIGGPAPGDSHGQL). The segment covering 1298 to 1311 (SGGGSSSGRAGGGF) has biased composition (gly residues). Over residues 1646–1658 (GGRESPSPHDDGI) the composition is skewed to basic and acidic residues. TPR repeat units follow at residues 1712 to 1745 (HDVWLKKGDYLLRRGHYAAARQLLSRARAHAADC) and 1854 to 1886 (MEMLRGQGVSTWRKSYDGAVTLVNQAIMALAAR). Residues 1961 to 1984 (RLAEVQLAAAEERERLAGADREKA) are a coiled coil. 4 disordered regions span residues 2068 to 2112 (RPFV…EAAA), 2278 to 2303 (ATAEPTPPLNAEKSKKKTDASAPAAA), 2346 to 2389 (AAKG…PGAA), and 2441 to 2465 (LPLPPPGSPDGKKEKKDKKEAAGPT). Residues 2069 to 2083 (PFVPPPKPPGAPKRP) show a composition bias toward pro residues. A compositionally biased stretch (acidic residues) spans 2087-2096 (AEEEEDEEGP). The span at 2097–2112 (DTAAADAAAEAAEAAA) shows a compositional bias: low complexity. The span at 2378-2389 (SKQGPKSGPGAA) shows a compositional bias: low complexity. A compositionally biased stretch (basic and acidic residues) spans 2450-2461 (DGKKEKKDKKEA). The stretch at 2613-2646 (ATGGPCTGLLFLGVGRFAAHVPPAVLASAPLGGC) is one TPR 7 repeat.

The protein belongs to the CFAP46 family. Part of the PDCP1 complex composed of CFAP46, CFAP54, CFAP74 and CFAP221; the PDCP1 complex binds calmodulin.

It localises to the cytoplasm. It is found in the cytoskeleton. Its subcellular location is the cilium axoneme. In terms of biological role, as part of the central apparatus of the cilium axoneme plays a role in cilium movement and thereby cell motility. The polypeptide is Cilia- and flagella-associated protein 46 (Chlamydomonas reinhardtii (Chlamydomonas smithii)).